A 106-amino-acid polypeptide reads, in one-letter code: MNNERIYQVLKGPVFSEKAQVLGETAGVQVFKVDINATKLEIKKAVEKLFGVDVLKVNTTITKGKSKRFGKTLGRRSDVKKAYVTLKAGQDVEMADLGDTAESAAE.

Belongs to the universal ribosomal protein uL23 family. Part of the 50S ribosomal subunit. Contacts protein L29, and trigger factor when it is bound to the ribosome.

Its function is as follows. One of the early assembly proteins it binds 23S rRNA. One of the proteins that surrounds the polypeptide exit tunnel on the outside of the ribosome. Forms the main docking site for trigger factor binding to the ribosome. In Acinetobacter baylyi (strain ATCC 33305 / BD413 / ADP1), this protein is Large ribosomal subunit protein uL23.